The following is a 600-amino-acid chain: CoA ligase FVEG_12633 (600 aa).

Residues 170–174 (TSGTT), H214, 321–323 (AAL), and 342–343 (ER) contribute to the ATP site. Residues 241 to 342 (NSVWTRLAAP…QLTGGNVLLE (102 aa)) form an SBD1 region. The SBD2 stretch occupies residues 343-420 (RYGMTEVGMA…LRGPTVFTGY (78 aa)). M346 is a binding site for substrate. Residues T347, D441, R471, and K564 each contribute to the ATP site. K564 contributes to the oxalate binding site.

Belongs to the ATP-dependent AMP-binding enzyme family.

In terms of biological role, coA ligase; part of the Fusarium detoxification of benzoxazolinone cluster 2 (FDB2) involved in the degradation of benzoxazolinones produced by the host plant. Maize, wheat, and rye produce the 2 benzoxazinone phytoanticipins 2,4-dihy-droxy-7-methoxy-1,4-benzoxazin-3-one (DIMBOA) and 2,4-dihydroxy-1,4-benzoxazin-3-one (DIBOA) that, due to their inherent instability once released, spontaneously degrade to the more stable corresponding benzoxazolinones, 6-methoxy-2-benzoxazolinone (MBOA) and 2-benzoxazolinone (BOA), respectively. The first step in the detoxification of benzoxazolinones involves the hydrolysis of the cyclic ester bond of benzoxazolinones by the FDB1 cluster gamma-lactamase MBL1 to aminophenols. MBL1 is able to convert BOA into 2-aminophenol (2-AP), as well as MBOA into 5-methoxy-2-aminophenol (2-AMP). The FDB2 cluster N-malonyltransferase FDB2/NAT1 then metabolizes aminophenols via N-malonylation to non-toxic malonamic acids. FDB2/NAT1 converts 2-AP into N-(2-hydroxyphenyl) malonamic acid (HPMA) and 2-AMP into N-(2-hydroxy-4-methoxyphenyl) malonamic acid (HMPMA). The duplicated dienlactone hydrolases DLH1 and DLH2 may provide redundant function for hydrolyzing the lactone moiety in the BOA molecule. The roles of the amidases an other enzymes encoded by the 2 FDB clusters have not been identified so far. This Gibberella moniliformis (strain M3125 / FGSC 7600) (Maize ear and stalk rot fungus) protein is CoA ligase FVEG_12633.